A 384-amino-acid chain; its full sequence is 4-hydroxy-3-methylbut-2-en-1-yl diphosphate synthase (flavodoxin) (384 aa).

Positions 280, 283, 315, and 322 each coordinate [4Fe-4S] cluster.

The protein belongs to the IspG family. It depends on [4Fe-4S] cluster as a cofactor.

The enzyme catalyses (2E)-4-hydroxy-3-methylbut-2-enyl diphosphate + oxidized [flavodoxin] + H2O + 2 H(+) = 2-C-methyl-D-erythritol 2,4-cyclic diphosphate + reduced [flavodoxin]. It functions in the pathway isoprenoid biosynthesis; isopentenyl diphosphate biosynthesis via DXP pathway; isopentenyl diphosphate from 1-deoxy-D-xylulose 5-phosphate: step 5/6. Converts 2C-methyl-D-erythritol 2,4-cyclodiphosphate (ME-2,4cPP) into 1-hydroxy-2-methyl-2-(E)-butenyl 4-diphosphate. In Frankia casuarinae (strain DSM 45818 / CECT 9043 / HFP020203 / CcI3), this protein is 4-hydroxy-3-methylbut-2-en-1-yl diphosphate synthase (flavodoxin).